The primary structure comprises 396 residues: Elongation factor Tu (396 aa).

A tr-type G domain is found at 10–206 (KPHCNIGTIG…AVDEFIPQPT (197 aa)). The segment at 19-26 (GHVDHGKT) is G1. Residue 19 to 26 (GHVDHGKT) participates in GTP binding. Residue T26 coordinates Mg(2+). The G2 stretch occupies residues 60–64 (GITIS). The G3 stretch occupies residues 81–84 (DCPG). Residues 81 to 85 (DCPGH) and 136 to 139 (NKVD) contribute to the GTP site. The interval 136 to 139 (NKVD) is G4. The tract at residues 174–176 (SAL) is G5.

This sequence belongs to the TRAFAC class translation factor GTPase superfamily. Classic translation factor GTPase family. EF-Tu/EF-1A subfamily. In terms of assembly, monomer.

Its subcellular location is the cytoplasm. It catalyses the reaction GTP + H2O = GDP + phosphate + H(+). Its function is as follows. GTP hydrolase that promotes the GTP-dependent binding of aminoacyl-tRNA to the A-site of ribosomes during protein biosynthesis. This Pelagibacter ubique (strain HTCC1062) protein is Elongation factor Tu.